We begin with the raw amino-acid sequence, 197 residues long: Putative rho GDP-dissociation inhibitor 1 (197 aa).

It belongs to the Rho GDI family. As to quaternary structure, interacts with rac1A, rac1B, rac1C, racB, raCC and RacE.

The protein localises to the cytoplasm. Its function is as follows. Regulates the GDP/GTP exchange reaction of the Rho proteins by inhibiting the dissociation of GDP from them, and the subsequent binding of GTP to them. Regulates the Rac-dependent signaling pathways controlling cytokinesis, actin reorganization and the contractile vacuole. Required for efficient accumulation of cap at the cell cortex. This chain is Putative rho GDP-dissociation inhibitor 1 (rdiA), found in Dictyostelium discoideum (Social amoeba).